Consider the following 89-residue polypeptide: Submaxillary mucin (89 aa).

The tract at residues alanine 1–leucine 89 is disordered. Residue serine 3 is glycosylated (O-linked (GalNAc...) serine; partial). 2 O-linked (GalNAc...) threonine; partial glycosylation sites follow: threonine 7 and threonine 14. An O-linked (GalNAc...) serine; partial glycan is attached at serine 15. An O-linked (GalNAc...) threonine; partial glycan is attached at threonine 23. Serine 25 carries O-linked (GalNAc...) serine; partial glycosylation. Threonine 27 carries O-linked (GalNAc...) threonine; partial glycosylation. Serine 29 carries an O-linked (GalNAc...) serine; partial glycan. Threonine 34 carries O-linked (GalNAc...) threonine; partial glycosylation. An O-linked (GalNAc...) serine; partial glycan is attached at serine 38. The O-linked (GalNAc...) threonine; partial glycan is linked to threonine 42. 2 O-linked (GalNAc...) serine; partial glycosylation sites follow: serine 47 and serine 49. Threonine 50 carries O-linked (GalNAc...) threonine; partial glycosylation. Serine 54 is a glycosylation site (O-linked (GalNAc...) serine; partial). Residues alanine 56–proline 71 show a composition bias toward low complexity. Threonine 59, threonine 60, threonine 67, and threonine 68 each carry an O-linked (GalNAc...) threonine; partial glycan. O-linked (GalNAc...) serine; partial glycans are attached at residues serine 73 and serine 76. An O-linked (GalNAc...) threonine; partial glycan is attached at threonine 78. A glycan (O-linked (GalNAc...) serine; partial) is linked at serine 83.

In terms of processing, heavily O-glycosylated at most but not all Ser and Thr residues. As to expression, expressed in the submaxillary salivary gland.

The protein resides in the secreted. The polypeptide is Submaxillary mucin (Canis lupus familiaris (Dog)).